We begin with the raw amino-acid sequence, 114 residues long: Large ribosomal subunit protein uL22 (114 aa).

It belongs to the universal ribosomal protein uL22 family. Part of the 50S ribosomal subunit.

Its function is as follows. This protein binds specifically to 23S rRNA; its binding is stimulated by other ribosomal proteins, e.g. L4, L17, and L20. It is important during the early stages of 50S assembly. It makes multiple contacts with different domains of the 23S rRNA in the assembled 50S subunit and ribosome. In terms of biological role, the globular domain of the protein is located near the polypeptide exit tunnel on the outside of the subunit, while an extended beta-hairpin is found that lines the wall of the exit tunnel in the center of the 70S ribosome. In Streptococcus uberis (strain ATCC BAA-854 / 0140J), this protein is Large ribosomal subunit protein uL22.